We begin with the raw amino-acid sequence, 299 residues long: dTDP-4-dehydrorhamnose reductase (299 aa).

NADH is bound by residues Gly10–Val12, Asp30, Asp39–Phe40, and Ala63–Thr65. An NADPH-binding site is contributed by Gln11–Val12. NADPH-binding positions include Asp39–Phe40, Ala63–Thr65, and Tyr102. Residue Thr104 to Asp105 participates in dTDP-beta-L-rhamnose binding. Residues Tyr128 and Lys132 each contribute to the NADH site. Residues Tyr128 and Lys132 each coordinate NADPH. Tyr128 acts as the Proton donor/acceptor in catalysis. DTDP-beta-L-rhamnose is bound at residue Trp153.

It belongs to the dTDP-4-dehydrorhamnose reductase family. Homodimer. The cofactor is Mg(2+).

It catalyses the reaction dTDP-beta-L-rhamnose + NADP(+) = dTDP-4-dehydro-beta-L-rhamnose + NADPH + H(+). It participates in carbohydrate biosynthesis; dTDP-L-rhamnose biosynthesis. Its pathway is bacterial outer membrane biogenesis; LPS O-antigen biosynthesis. In terms of biological role, involved in the biosynthesis of the dTDP-L-rhamnose which is an important component of lipopolysaccharide (LPS). Catalyzes the reduction of dTDP-6-deoxy-L-lyxo-4-hexulose to yield dTDP-L-rhamnose. RmlD uses NADH and NADPH nearly equally well. The chain is dTDP-4-dehydrorhamnose reductase from Escherichia coli (strain K12).